The following is a 134-amino-acid chain: Large ribosomal subunit protein bL21 (134 aa).

Belongs to the bacterial ribosomal protein bL21 family. In terms of assembly, part of the 50S ribosomal subunit. Contacts protein L20.

In terms of biological role, this protein binds to 23S rRNA in the presence of protein L20. The protein is Large ribosomal subunit protein bL21 of Pelagibacter ubique (strain HTCC1062).